The chain runs to 329 residues: Oligopeptide transport ATP-binding protein AppF (329 aa).

Positions leucine 10–leucine 261 constitute an ABC transporter domain. Glycine 53–serine 60 is a binding site for ATP.

It belongs to the ABC transporter superfamily.

It is found in the cell membrane. Functionally, this protein is a component of an oligopeptide permease, a binding protein-dependent transport system. This APP system can completely substitute for the OPP system in both sporulation and genetic competence, though, unlike OPP, is incapable of transporting tripeptides. Probably responsible for energy coupling to the transport system. The polypeptide is Oligopeptide transport ATP-binding protein AppF (appF) (Bacillus subtilis (strain 168)).